The chain runs to 483 residues: Glutathione reductase (483 aa).

N-acetylmethionine is present on Met1. Leu2 is subject to N-acetylserine. 2 residues coordinate FAD: Ser33 and Gly34. Residue Ser33 participates in glutathione binding. Glutathione is bound at residue Arg40. FAD contacts are provided by Glu53, Thr60, Cys61, and Lys69. An intrachain disulfide couples Cys61 to Cys66. Tyr123 provides a ligand contact to glutathione. FAD is bound at residue Ala139. NADP(+) is bound by residues Ala205, Ile208, Glu211, Arg228, and Arg234. Glutathione is bound at residue Thr243. Asn278 carries N-linked (GlcNAc...) asparagine glycosylation. Gly294 serves as a coordination point for NADP(+). Asp334 is a binding site for FAD. Glu340 is a binding site for NADP(+). An FAD-binding site is contributed by Thr342. Arg350 lines the glutathione pocket. Val375 contacts NADP(+). Lys425 provides a ligand contact to glutathione. His472 is an FAD binding site. The active-site Proton acceptor is His472.

It belongs to the class-I pyridine nucleotide-disulfide oxidoreductase family. Homodimer. Requires FAD as cofactor.

The protein resides in the cytoplasm. Its subcellular location is the nucleus. It is found in the mitochondrion. It localises to the peroxisome. The enzyme catalyses 2 glutathione + NADP(+) = glutathione disulfide + NADPH + H(+). In terms of biological role, catalyzes the reduction of glutathione disulfide (GSSG) to reduced glutathione (GSH). Constitutes the major mechanism to maintain a high GSH:GSSG ratio in the cytosol. The protein is Glutathione reductase of Saccharomyces cerevisiae (strain ATCC 204508 / S288c) (Baker's yeast).